The sequence spans 206 residues: Small ribosomal subunit protein uS4 (206 aa).

The S4 RNA-binding domain occupies 96 to 156 (GRLDNVVYRM…EKAKKQSRVK (61 aa)).

It belongs to the universal ribosomal protein uS4 family. In terms of assembly, part of the 30S ribosomal subunit. Contacts protein S5. The interaction surface between S4 and S5 is involved in control of translational fidelity.

Its function is as follows. One of the primary rRNA binding proteins, it binds directly to 16S rRNA where it nucleates assembly of the body of the 30S subunit. Functionally, with S5 and S12 plays an important role in translational accuracy. The sequence is that of Small ribosomal subunit protein uS4 from Erwinia tasmaniensis (strain DSM 17950 / CFBP 7177 / CIP 109463 / NCPPB 4357 / Et1/99).